Here is a 1692-residue protein sequence, read N- to C-terminus: Adenylate cyclase (1692 aa).

Disordered stretches follow at residues 1 to 22 and 103 to 142; these read MDQS…FKTG and SLSD…YKEN. Over residues 120-132 the composition is skewed to basic and acidic residues; sequence ESSEKSEVPRDTR. A required for interaction with gpa2 region spans residues 174–195; sequence FTNLTFPEPISDDSDSVEFQRD. The 89-residue stretch at 292–380 folds into the Ras-associating domain; that stretch reads KEFFLRVYRD…SDEEINEEDN (89 aa). LRR repeat units lie at residues 430-450, 454-474, 477-498, 503-524, 526-547, 549-570, 572-594, 596-617, 618-639, 660-681, 684-705, 707-729, 730-751, 753-774, 783-805, 807-827, 831-852, 855-876, 878-899, 901-922, and 930-951; these read ELIS…DFME, KLKR…PITA, QLEV…IFSG, SLKE…TRYL, NLTY…ITEL, QLET…IGSL, KLKH…IGLL, NLET…SECP, KLNS…NPSA, NLVY…VIET, NVET…ISAM, NLKY…GKLK, HLVH…VWQV, SLKV…VATS, QLKI…EFVM, TVEE…TALE, CLKV…FFQN, DLKH…STAQ, LLET…EALS, SLRF…KAEK, and QLEY…EDTN. Residues 995-1275 form the PPM-type phosphatase domain; that stretch reads RYGVCGYLSR…KNVLVVIVEL (281 aa). In terms of domain architecture, Guanylate cyclase spans 1332–1469; that stretch reads AMVFTDIKNS…PVVNRTSRVV (138 aa). Mg(2+) is bound by residues Asp-1337 and Asp-1380. Asp-1337 and Asp-1380 together coordinate Mn(2+). Residues 1585-1597 are compositionally biased toward basic and acidic residues; sequence SDSKSVHGEEGGS. Residues 1585-1614 are disordered; that stretch reads SDSKSVHGEEGGSGKRSVSSLRNVSPSEST. Positions 1600-1614 are enriched in polar residues; that stretch reads RSVSSLRNVSPSEST.

Belongs to the adenylyl cyclase class-3 family. As to quaternary structure, interacts (via N-terminus) with gpa2; the interaction is direct and serves to activate adenylate cyclase and cAMP-PKA signaling, to repress sexual development and gluconeogenesis. Interacts with git1. The cofactor is Mn(2+).

The protein localises to the cytoplasm. The catalysed reaction is ATP = 3',5'-cyclic AMP + diphosphate. With respect to regulation, activated by binding G protein gpa2. Activated by git1. In contrast to yeast cyclase, S.pombe cyclase is not likely to be regulated by RAS proteins. Functionally, acts in glucose-induced cAMP signaling by catalyzing the synthesis of the second messenger, cAMP to activate PKA signaling and repress sexual development and gluconeogenesis. This Schizosaccharomyces pombe (strain 972 / ATCC 24843) (Fission yeast) protein is Adenylate cyclase.